We begin with the raw amino-acid sequence, 287 residues long: Pyridoxal kinase PdxY (287 aa).

Residues Ser10 and 45 to 46 (TQ) contribute to the substrate site. Residues Asp112, Ala144, Glu149, Lys182, and 209-212 (RPLV) contribute to the ATP site. Asp224 is a binding site for substrate.

Belongs to the pyridoxine kinase family. PdxY subfamily. In terms of assembly, homodimer. The cofactor is Mg(2+).

The catalysed reaction is pyridoxal + ATP = pyridoxal 5'-phosphate + ADP + H(+). It functions in the pathway cofactor metabolism; pyridoxal 5'-phosphate salvage; pyridoxal 5'-phosphate from pyridoxal: step 1/1. In terms of biological role, pyridoxal kinase involved in the salvage pathway of pyridoxal 5'-phosphate (PLP). Catalyzes the phosphorylation of pyridoxal to PLP. The sequence is that of Pyridoxal kinase PdxY from Shigella flexneri.